We begin with the raw amino-acid sequence, 489 residues long: Betaine aldehyde dehydrogenase (489 aa).

K(+)-binding residues include Thr26 and Asp93. 150 to 152 contributes to the NAD(+) binding site; that stretch reads GAW. Lys162 (charge relay system) is an active-site residue. 176–179 contacts NAD(+); the sequence is KPSE. Val180 contributes to the K(+) binding site. Residue 229-232 participates in NAD(+) binding; that stretch reads GVET. Leu245 provides a ligand contact to K(+). Glu251 serves as the catalytic Proton acceptor. Residues Gly253, Cys285, and Glu386 each coordinate NAD(+). Cys285 (nucleophile) is an active-site residue. Residue Cys285 is modified to Cysteine sulfenic acid (-SOH). K(+) contacts are provided by Lys456 and Gly459. Catalysis depends on Glu463, which acts as the Charge relay system.

Belongs to the aldehyde dehydrogenase family. In terms of assembly, dimer of dimers. Requires K(+) as cofactor.

It catalyses the reaction betaine aldehyde + NAD(+) + H2O = glycine betaine + NADH + 2 H(+). It participates in amine and polyamine biosynthesis; betaine biosynthesis via choline pathway; betaine from betaine aldehyde: step 1/1. Its function is as follows. Involved in the biosynthesis of the osmoprotectant glycine betaine. Catalyzes the irreversible oxidation of betaine aldehyde to the corresponding acid. This chain is Betaine aldehyde dehydrogenase, found in Burkholderia multivorans (strain ATCC 17616 / 249).